The following is a 185-amino-acid chain: 3-hydroxyanthranilate 3,4-dioxygenase (185 aa).

Arg44 contacts O2. His48, Glu54, and His95 together coordinate Fe cation. Glu54 contributes to the substrate binding site. Arg99 and Glu109 together coordinate substrate. The a divalent metal cation site is built by Cys124, Cys127, Cys161, and Cys164.

This sequence belongs to the 3-HAO family. Requires Fe(2+) as cofactor.

Its subcellular location is the cytoplasm. The catalysed reaction is 3-hydroxyanthranilate + O2 = (2Z,4Z)-2-amino-3-carboxymuconate 6-semialdehyde. Its pathway is cofactor biosynthesis; NAD(+) biosynthesis; quinolinate from L-kynurenine: step 3/3. In terms of biological role, catalyzes the oxidative ring opening of 3-hydroxyanthranilate to 2-amino-3-carboxymuconate semialdehyde, which spontaneously cyclizes to quinolinate. This chain is 3-hydroxyanthranilate 3,4-dioxygenase, found in Podospora anserina (strain S / ATCC MYA-4624 / DSM 980 / FGSC 10383) (Pleurage anserina).